The sequence spans 622 residues: E3 ubiquitin-protein ligase RNF12-A (622 aa).

Disordered regions lie at residues 1 to 26 (MESADSTGKGSIEQSESQRQSQMDRL), 67 to 386 (RLQQ…ESER), and 473 to 514 (NANA…NSRG). Residues 11–21 (SIEQSESQRQS) are compositionally biased toward low complexity. Polar residues-rich tracts occupy residues 110–138 (SVRQTGNTTRSGQRGNQSWRAVSRTNPNS) and 147–163 (INVNRTSGNPSMPSLDQ). Residues 216–242 (RSPDQRRTRARTDRSRSPLHHAVDPPI) are compositionally biased toward basic and acidic residues. The segment covering 247–256 (HSSSQTVDTS) has biased composition (polar residues). A compositionally biased stretch (low complexity) spans 272–289 (SSQVQNSSSSNETEGSSR). Positions 300-317 (VLGTEGQSQSTVHLSNPE) are enriched in polar residues. Positions 318–331 (TRSSSQTPQTDSST) are enriched in low complexity. Residues 332–341 (NAETTGTGQR) show a composition bias toward polar residues. Residues 355 to 365 (RPGDYRQRDSI) are compositionally biased toward basic and acidic residues. Positions 366 to 382 (ANRTRSRSQTPNNTVTY) are enriched in polar residues. Residues 568–609 (CSVCITEYTEGNKLRKLPCSHEYHIHCIDRWLSENSTCPICR) form an RING-type; atypical zinc finger. The PDZ-binding motif lies at 619–622 (ESIV).

Belongs to the RNF12 family. Forms homodimers through the C-terminal region. The N-terminus interacts with the homeobox of LIM/homeobox factor lhx1/lim1, with lhx3/lim3 and lhx5/lim5, and with the N-terminus of ldb1. Shows overlapping expression with lhx1/lim1 and ldb1 in the gastrula mesoderm, and expression overlaps with ldb1 throughout early embryogenesis. After gastrulation, expression is gradually restricted to tissues originated from the ectoderm, the neuroectoderm, neural crest and epidermis, and subsequently to the neural tube as well as the head and tailbud region.

The protein resides in the nucleus. The catalysed reaction is S-ubiquitinyl-[E2 ubiquitin-conjugating enzyme]-L-cysteine + [acceptor protein]-L-lysine = [E2 ubiquitin-conjugating enzyme]-L-cysteine + N(6)-ubiquitinyl-[acceptor protein]-L-lysine.. The protein operates within protein modification; protein ubiquitination. In terms of biological role, acts as an E3 ubiquitin-protein ligase specific for ldb1, mediating ubiquitination and proteasome-dependent degradation of excess ldb1 in a RING-dependent manner. Does not degrade ldb1 bound to lhx1/lim1, nor lim1 itself and thus contributes to the establishment of proper ldb1-lhx1/lim1 stoichiometry and the formation of a ldb1-lhx1/lim1 complex. Interferes with Spemann organizer function and suppresses secondary axis formation induced by ldb1 and lhx1/lim1. The protein is E3 ubiquitin-protein ligase RNF12-A (rnf12-a) of Xenopus laevis (African clawed frog).